Reading from the N-terminus, the 128-residue chain is Sirohydrochlorin cobaltochelatase (128 aa).

H9 serves as the catalytic Proton acceptor. Position 9 (H9) interacts with Co(2+). Substrate is bound by residues K43 and 68 to 73 (FATGTH). H73 is a Co(2+) binding site.

This sequence belongs to the CbiX family. CbiXS subfamily. In terms of assembly, homotetramer; dimer of dimers.

It catalyses the reaction Co-sirohydrochlorin + 2 H(+) = sirohydrochlorin + Co(2+). It functions in the pathway cofactor biosynthesis; adenosylcobalamin biosynthesis; cob(II)yrinate a,c-diamide from sirohydrochlorin (anaerobic route): step 1/10. Its function is as follows. Catalyzes the insertion of Co(2+) into sirohydrochlorin as part of the anaerobic pathway to cobalamin biosynthesis. The chain is Sirohydrochlorin cobaltochelatase from Saccharolobus islandicus (strain Y.N.15.51 / Yellowstone #2) (Sulfolobus islandicus).